We begin with the raw amino-acid sequence, 916 residues long: MSYTLDSLGNPSAYRRVTETRSSFSRVSGSPSSGFRSQSWSRGSPSTVSSSYKRSMLAPRLAYSSAMLSSAESSLDFSQSSSLLNGGSGPGGDYKLSRSNEKEQLQGLNDRFAGYIEKVHYLEQQNKEIEAEIQALRQKQASHAQLGDAYDQEIRELRATLEMVNHEKAQVQLDSDHLEEDIHRLKERFEEEARLRDDTEAAIRALRKDIEEASLVKVELDKKVQSLQDEVAFLRSNHEEEVADLLAQIQASHITVERKDYLKTDISTALKEIRSQLESHSDQNMHQAEEWFKCRYAKLTEAAEQNKEAIRSAKEEIAEYRRQLQSKSIELESVRGTKESLERQLSDIEERHNHDLSSYQDTIQQLENELRGTKWEMARHLREYQDLLNVKMALDIEIAAYRKLLEGEETRFSTFAGSITGPLYTHRPPITISSKIQKPKVEAPKLKVQHKFVEEIIEETKVEDEKSEMEEALTAITEELAVSMKEEKKEAAEEKEEEPEAEEEEVAAKKSPVKATAPEVKEEEGEKEEEEGQEEEEEEDEGAKSDQAEEGGSEKEGSSEKEEGEQEEGETEAEAEGEEAEAKEEKKVEEKSEEVATKEELVADAKVEKPEKAKSPVPKSPVEEKGKSPVPKSPVEEKGKSPVPKSPVEEKGKSPVPKSPVEEKGKSPVSKSPVEEKAKSPVPKSPVEEAKSKAEVGKGEQKEEEEKEVKEAPKEEKVEKKEEKPKDVPEKKKAESPVKEEAVAEVVTITKSVKVHLEKETKEEGKPLQQEKEKEKAGGEGGSEEEGSDKGAKGSRKEDIAVNGEVEGKEEVEQETKEKGSGREEEKGVVTNGLDLSPADEKKGGDKSEEKVVVTKTVEKITSEGGDGATKYITKSVTVTQKVEEHEETFEEKLVSTKKVEKVTSHAIVKEVTQSD.

Polar residues predominate over residues 1-10 (MSYTLDSLGN). The disordered stretch occupies residues 1-51 (MSYTLDSLGNPSAYRRVTETRSSFSRVSGSPSSGFRSQSWSRGSPSTVSSS). The residue at position 2 (Ser2) is an N-acetylserine. The segment at 2–104 (SYTLDSLGNP…KLSRSNEKEQ (103 aa)) is head. Over residues 21–44 (RSSFSRVSGSPSSGFRSQSWSRGS) the composition is skewed to low complexity. Ser30 carries the phosphoserine modification. Residue Arg42 is modified to Omega-N-methylarginine. Thr47 carries an O-linked (GlcNAc) threonine glycan. Ser99 carries the phosphoserine modification. Positions 101–412 (EKEQLQGLND…KLLEGEETRF (312 aa)) constitute an IF rod domain. Residues 105–136 (LQGLNDRFAGYIEKVHYLEQQNKEIEAEIQAL) are coil 1A. The segment at 137–149 (RQKQASHAQLGDA) is linker 1. The tract at residues 150 to 248 (YDQEIRELRA…EEEVADLLAQ (99 aa)) is coil 1B. The residue at position 226 (Ser226) is a Phosphoserine. Positions 249-265 (IQASHITVERKDYLKTD) are linker 12. Residues 266-287 (ISTALKEIRSQLESHSDQNMHQ) form a coil 2A region. Residues 288–291 (AEEW) are linker 2. The interval 292-412 (FKCRYAKLTE…KLLEGEETRF (121 aa)) is coil 2B. Residue Tyr320 is modified to Phosphotyrosine. A phosphoserine mark is found at Ser346 and Ser418. The segment at 413-916 (STFAGSITGP…AIVKEVTQSD (504 aa)) is tail. A glycan (O-linked (GlcNAc) threonine) is linked at Thr431. Phosphoserine is present on residues Ser467 and Ser483. The interval 485–851 (KEEKKEAAEE…KKGGDKSEEK (367 aa)) is disordered. Residues 493–505 (EEKEEEPEAEEEE) are compositionally biased toward acidic residues. Ser511 carries the post-translational modification Phosphoserine. Positions 521–541 (KEEEGEKEEEEGQEEEEEEDE) are enriched in acidic residues. Positions 542 to 561 (GAKSDQAEEGGSEKEGSSEK) are enriched in basic and acidic residues. 4 positions are modified to phosphoserine: Ser545, Ser553, Ser558, and Ser559. Positions 562–582 (EEGEQEEGETEAEAEGEEAEA) are enriched in acidic residues. Residue Thr571 is modified to Phosphothreonine. A compositionally biased stretch (basic and acidic residues) spans 583–614 (KEEKKVEEKSEEVATKEELVADAKVEKPEKAK). 6 repeat units span residues 614-626 (KSPVPKSPVEEKG), 627-639 (KSPVPKSPVEEKG), 640-652 (KSPVPKSPVEEKG), 653-665 (KSPVPKSPVEEKG), 666-678 (KSPVSKSPVEEKA), and 679-691 (KSPVPKSPVEEAK). The 6 X 13 AA approximate tandem repeats of K-S-P-V-[PS]-K-S-P-V-E-E-[KA]-[GAK] stretch occupies residues 614–691 (KSPVPKSPVE…VPKSPVEEAK (78 aa)). 2 positions are modified to phosphoserine: Ser641 and Ser646. Phosphoserine occurs at positions 680 and 685. 3 stretches are compositionally biased toward basic and acidic residues: residues 686–701 (PVEEAKSKAEVGKGEQ), 707–742 (KEVKEAPKEEKVEKKEEKPKDVPEKKKAESPVKEEA), and 755–778 (VHLEKETKEEGKPLQQEKEKEKAG). Ser736 is subject to Phosphoserine. 3 positions are modified to phosphoserine: Ser783, Ser821, and Ser837. Basic and acidic residues predominate over residues 788–828 (SDKGAKGSRKEDIAVNGEVEGKEEVEQETKEKGSGREEEKG). Residues 839-851 (ADEKKGGDKSEEK) show a composition bias toward basic and acidic residues.

Belongs to the intermediate filament family. As to quaternary structure, forms heterodimers with NEFL; which can further hetero-oligomerize (in vitro). Forms heterodimers with INA (in vitro). There are a number of repeats of the tripeptide K-S-P, NFM is phosphorylated on a number of the serines in this motif. It is thought that phosphorylation of NFM results in the formation of interfilament cross bridges that are important in the maintenance of axonal caliber. Post-translationally, phosphorylation seems to play a major role in the functioning of the larger neurofilament polypeptides (NF-M and NF-H), the levels of phosphorylation being altered developmentally and coincidentally with a change in the neurofilament function. In terms of processing, phosphorylated in the head and rod regions by the PKC kinase PKN1, leading to the inhibition of polymerization.

It localises to the cytoplasm. Its subcellular location is the cytoskeleton. The protein resides in the cell projection. The protein localises to the axon. In terms of biological role, neurofilaments usually contain three intermediate filament proteins: NEFL, NEFM, and NEFH which are involved in the maintenance of neuronal caliber. May additionally cooperate with the neuronal intermediate filament proteins PRPH and INA to form neuronal filamentous networks. The polypeptide is Neurofilament medium polypeptide (NEFM) (Homo sapiens (Human)).